A 245-amino-acid chain; its full sequence is Aquaporin SIP1-1 (245 aa).

2 helical membrane passes run alanine 14–valine 34 and leucine 55–phenylalanine 75. Positions asparagine 76–threonine 78 match the NPA 1 motif. 3 helical membrane passes run phenylalanine 100 to alanine 120, glycine 138 to valine 158, and valine 164 to glutamate 184. Residues asparagine 191 to alanine 193 carry the NPA 2 motif. Residues valine 213–phenylalanine 233 form a helical membrane-spanning segment.

Belongs to the MIP/aquaporin (TC 1.A.8) family. SIP (TC 1.A.8.10) subfamily.

The protein localises to the membrane. Functionally, aquaporins facilitate the transport of water and small neutral solutes across cell membranes. In Zea mays (Maize), this protein is Aquaporin SIP1-1 (SIP1-1).